The chain runs to 215 residues: Cytochrome b6 (215 aa).

The chain crosses the membrane as a helical span at residues 32–52 (IFYCLGGITLTCFLVQVATGF). Cys-35 serves as a coordination point for heme c. His-86 and His-100 together coordinate heme b. A run of 3 helical transmembrane segments spans residues 90–110 (ASMM…TGGF), 116–136 (LTWV…VTGY), and 186–206 (LHTF…FPMI). The heme b site is built by His-187 and His-202.

This sequence belongs to the cytochrome b family. PetB subfamily. As to quaternary structure, the 4 large subunits of the cytochrome b6-f complex are cytochrome b6, subunit IV (17 kDa polypeptide, PetD), cytochrome f and the Rieske protein, while the 4 small subunits are PetG, PetL, PetM and PetN. The complex functions as a dimer. Heme b serves as cofactor. The cofactor is heme c.

The protein resides in the plastid. It is found in the chloroplast thylakoid membrane. Its function is as follows. Component of the cytochrome b6-f complex, which mediates electron transfer between photosystem II (PSII) and photosystem I (PSI), cyclic electron flow around PSI, and state transitions. The polypeptide is Cytochrome b6 (Lactuca sativa (Garden lettuce)).